Consider the following 279-residue polypeptide: Tryptophan 2,3-dioxygenase (279 aa).

Substrate-binding positions include 48–52 (FIVIH), Y110, and R114. A heme-binding site is contributed by H237. Position 251 (T251) interacts with substrate.

This sequence belongs to the tryptophan 2,3-dioxygenase family. Homotetramer. Heme is required as a cofactor.

The enzyme catalyses L-tryptophan + O2 = N-formyl-L-kynurenine. It functions in the pathway amino-acid degradation; L-tryptophan degradation via kynurenine pathway; L-kynurenine from L-tryptophan: step 1/2. In terms of biological role, heme-dependent dioxygenase that catalyzes the oxidative cleavage of the L-tryptophan (L-Trp) pyrrole ring and converts L-tryptophan to N-formyl-L-kynurenine. Catalyzes the oxidative cleavage of the indole moiety. This is Tryptophan 2,3-dioxygenase from Bacillus cereus (strain ATCC 10987 / NRS 248).